The following is a 397-amino-acid chain: Acetate kinase (397 aa).

A Mg(2+)-binding site is contributed by Asn8. Position 15 (Lys15) interacts with ATP. Arg89 provides a ligand contact to substrate. The active-site Proton donor/acceptor is the Asp146. ATP-binding positions include 206-210 (HIGNG), 281-283 (DLR), and 328-332 (GVGEN). Residue Glu381 coordinates Mg(2+).

It belongs to the acetokinase family. As to quaternary structure, homodimer. It depends on Mg(2+) as a cofactor. Requires Mn(2+) as cofactor.

The protein localises to the cytoplasm. The enzyme catalyses acetate + ATP = acetyl phosphate + ADP. The protein operates within metabolic intermediate biosynthesis; acetyl-CoA biosynthesis; acetyl-CoA from acetate: step 1/2. In terms of biological role, catalyzes the formation of acetyl phosphate from acetate and ATP. Can also catalyze the reverse reaction. In Oceanobacillus iheyensis (strain DSM 14371 / CIP 107618 / JCM 11309 / KCTC 3954 / HTE831), this protein is Acetate kinase.